The chain runs to 385 residues: 1-deoxy-D-xylulose 5-phosphate reductoisomerase (385 aa).

The NADPH site is built by Thr-10, Gly-11, Ser-12, Ile-13, and Asn-124. Lys-125 serves as a coordination point for 1-deoxy-D-xylulose 5-phosphate. Residue Glu-126 coordinates NADPH. Asp-150 provides a ligand contact to Mn(2+). 1-deoxy-D-xylulose 5-phosphate-binding residues include Ser-151, Glu-152, Ser-176, and His-199. Glu-152 contributes to the Mn(2+) binding site. Gly-205 serves as a coordination point for NADPH. 1-deoxy-D-xylulose 5-phosphate contacts are provided by Ser-212, Asn-217, Lys-218, and Glu-221. Glu-221 lines the Mn(2+) pocket.

This sequence belongs to the DXR family. Requires Mg(2+) as cofactor. The cofactor is Mn(2+).

It carries out the reaction 2-C-methyl-D-erythritol 4-phosphate + NADP(+) = 1-deoxy-D-xylulose 5-phosphate + NADPH + H(+). It functions in the pathway isoprenoid biosynthesis; isopentenyl diphosphate biosynthesis via DXP pathway; isopentenyl diphosphate from 1-deoxy-D-xylulose 5-phosphate: step 1/6. Catalyzes the NADPH-dependent rearrangement and reduction of 1-deoxy-D-xylulose-5-phosphate (DXP) to 2-C-methyl-D-erythritol 4-phosphate (MEP). The protein is 1-deoxy-D-xylulose 5-phosphate reductoisomerase of Clostridium kluyveri (strain NBRC 12016).